A 242-amino-acid polypeptide reads, in one-letter code: Small ribosomal subunit protein uS2 (242 aa).

It belongs to the universal ribosomal protein uS2 family.

This Shewanella halifaxensis (strain HAW-EB4) protein is Small ribosomal subunit protein uS2.